A 399-amino-acid polypeptide reads, in one-letter code: Serine palmitoyltransferase (399 aa).

Residues 113 to 114, H213, T241, and S243 contribute to the pyridoxal 5'-phosphate site; that span reads GF. K244 bears the N6-(pyridoxal phosphate)lysine mark.

It belongs to the class-II pyridoxal-phosphate-dependent aminotransferase family. As to quaternary structure, homodimer. Requires pyridoxal 5'-phosphate as cofactor.

It is found in the cytoplasm. The catalysed reaction is L-serine + hexadecanoyl-CoA + H(+) = 3-oxosphinganine + CO2 + CoA. It participates in lipid metabolism; sphingolipid metabolism. Catalyzes the condensation of L-serine with palmitoyl-CoA (hexadecanoyl-CoA) to produce 3-oxosphinganine. The protein is Serine palmitoyltransferase of Sphingobacterium spiritivorum (Flavobacterium spiritivorum).